The primary structure comprises 192 residues: Fe/S biogenesis protein NfuA (192 aa).

[4Fe-4S] cluster-binding residues include C150 and C153.

It belongs to the NfuA family. In terms of assembly, homodimer. Requires [4Fe-4S] cluster as cofactor.

Functionally, involved in iron-sulfur cluster biogenesis. Binds a 4Fe-4S cluster, can transfer this cluster to apoproteins, and thereby intervenes in the maturation of Fe/S proteins. Could also act as a scaffold/chaperone for damaged Fe/S proteins. The sequence is that of Fe/S biogenesis protein NfuA from Ruthia magnifica subsp. Calyptogena magnifica.